Here is a 1021-residue protein sequence, read N- to C-terminus: Ras-related protein Rab-44 (1021 aa).

A disordered region spans residues 1-40 (METGQRTSRKVRKLGSNRRRQTREPADGEGAAVAPEPESW). A compositionally biased stretch (basic residues) spans 7 to 21 (TSRKVRKLGSNRRRQ). Residues 77-112 (GSKEESEMIFDWVDVERKGHLSLEEFSSGLKNIFGS) form the EF-hand domain. The disordered stretch occupies residues 113 to 133 (SQSPHRLRRRKPLPSKRVSAT). Positions 117 to 126 (HRLRRRKPLP) are enriched in basic residues. Positions 191 to 315 (LAKMTSRLQE…AGRLEEVRGQ (125 aa)) form a coiled coil. Disordered regions lie at residues 339–405 (SFPG…QTPR), 419–483 (LFGQ…LLWG), and 495–827 (VLIP…GGPQ). Residues 443 to 467 (KDNKGVDPHEQDIRAEQPVEPHDPD) are compositionally biased toward basic and acidic residues. Residues 501 to 514 (DGPPPPANSPPPQA) show a composition bias toward pro residues. Residues 532–559 (PGSWAPPSGAQPGAGAGPQEPTQTPPTM) show a composition bias toward low complexity. Residues 676–685 (SEEGKQEGRG) show a composition bias toward basic and acidic residues. 2 stretches are compositionally biased toward polar residues: residues 688–697 (DLSSEQSEQS) and 710–727 (LPQQDSLLVSLPSATPQA). Residues 736–759 (PGKSAPPRGSPPRGAQPGAGAGPQ) are compositionally biased toward low complexity. Residues 783 to 810 (HAEEQGPPHSREPRAESRLEDPGMDSRE) show a composition bias toward basic and acidic residues. GTP contacts are provided by residues 840–847 (GDSNVGKT), 888–892 (DTAGQ), and 946–949 (NKMD). 2 S-geranylgeranyl cysteine lipidation sites follow: Cys1019 and Cys1020.

Belongs to the small GTPase superfamily. Rab family.

Its subcellular location is the cell membrane. The sequence is that of Ras-related protein Rab-44 (RAB44) from Homo sapiens (Human).